We begin with the raw amino-acid sequence, 225 residues long: Ethylene-responsive transcription factor 3 (225 aa).

The segment covering 1–12 has biased composition (low complexity); the sequence is MRRGRAAAAPAP. Disordered stretches follow at residues 1-29 and 82-193; these read MRRG…IRFR and NFPL…NIAS. A DNA-binding region (AP2/ERF) is located at residues 27–84; the sequence is RFRGVRKRPWGRFAAEIRDPWKKTRVWLGTFDSAEDAARAYDAAARALRGPKAKTNFP. Over residues 118–134 the composition is skewed to low complexity; sequence SQRPTSSSMSSTVESFS. The segment covering 176–185 has biased composition (basic and acidic residues); the sequence is DHGDCEKEND. The short motif at 202-208 is the EAR-like (transcriptional repression) element; it reads FDLNLPP.

It belongs to the ethylene-response factor family. Class 2 subfamily.

It localises to the nucleus. Functionally, transcription factor that binds to the GCC-box pathogenesis-related promoter element. Involved in the regulation of gene expression by stress factors and by components of stress signal transduction pathways. Probably acts as a transcriptional repressor and may regulate other AtERFs. In Nicotiana tabacum (Common tobacco), this protein is Ethylene-responsive transcription factor 3 (ERF3).